Consider the following 62-residue polypeptide: Defensin-like protein A (62 aa).

The N-terminal stretch at 1-26 (MRCVVLFMVSCLLIVLLINHFEEVEA) is a signal peptide. A disulfide bond links Cys-42 and Cys-52.

The protein belongs to the DEFL family.

The protein localises to the secreted. In terms of biological role, truncated and inactivated form of SCRA, a protein involved in male-mediated self-incompatibility when active. Most A.thaliana cultivars contain such an inactive form and thus, are self-fertiles. This chain is Defensin-like protein A (SCRA), found in Arabidopsis thaliana (Mouse-ear cress).